A 463-amino-acid chain; its full sequence is Trigger factor (463 aa).

Positions 162-243 (GDHVSIDLSA…VHSVKLKELP (82 aa)) constitute a PPIase FKBP-type domain. The span at 427-444 (SGNTIEPPTPVHTETITV) shows a compositional bias: polar residues. The segment at 427 to 463 (SGNTIEPPTPVHTETITVASGDEETEESAAEQGETEK) is disordered.

Belongs to the FKBP-type PPIase family. Tig subfamily.

It is found in the cytoplasm. It carries out the reaction [protein]-peptidylproline (omega=180) = [protein]-peptidylproline (omega=0). Involved in protein export. Acts as a chaperone by maintaining the newly synthesized protein in an open conformation. Functions as a peptidyl-prolyl cis-trans isomerase. The protein is Trigger factor of Thermobifida fusca (strain YX).